Reading from the N-terminus, the 504-residue chain is MFS antiporter QDR2 (504 aa).

Residues 1 to 14 are compositionally biased toward polar residues; that stretch reads MLSTTQSVTEPTEV. Residues 1–23 are disordered; that stretch reads MLSTTQSVTEPTEVTSKKVEDIE. The Cytoplasmic segment spans residues 1 to 41; the sequence is MLSTTQSVTEPTEVTSKKVEDIEKENDEETPYSIFTSYDRL. Residues 42–62 traverse the membrane as a helical segment; that stretch reads VLIVILSLIGFWSTISSPIYF. Topologically, residues 63–75 are extracellular; that stretch reads PALPTLTSYFHTS. A helical membrane pass occupies residues 76–96; the sequence is SSIMNISVVAYLIFQGIAPTI. Residues 97 to 106 are Cytoplasmic-facing; sequence SSNLADTFGR. A helical transmembrane segment spans residues 107–129; it reads RPVILASIIVFCASCVAISQTNV. Residues 130-132 lie on the Extracellular side of the membrane; sequence YWL. Residues 133 to 155 form a helical membrane-spanning segment; sequence LAVLRCIQAAGIAAVISISSGVA. Residues 156-169 lie on the Cytoplasmic side of the membrane; sequence GDVCTRANRGSMVG. A helical transmembrane segment spans residues 170–190; that stretch reads AVAGLQLVGNGIGGLVGAALI. The Extracellular segment spans residues 191 to 198; the sequence is SSFNSWRS. The chain crosses the membrane as a helical span at residues 199–219; sequence IFIFLTIGGGVTFILAIFILP. Residues 220 to 278 lie on the Cytoplasmic side of the membrane; that stretch reads ETSRKLVGNGSVVPKNILNKSPYIYLPHFKKRMNNDITTIVPATRFDLLGPLKIFFQKN. Residues 279–299 traverse the membrane as a helical segment; that stretch reads VFCTLLPVGIHFAAWTMVLTS. Over 300-311 the chain is Extracellular; the sequence is LSTELESRYHYS. Residues 312–332 traverse the membrane as a helical segment; that stretch reads VMHVGLIYLPQGIACIAGSLV. Topologically, residues 333-370 are cytoplasmic; the sequence is VGKSLDWYYRYRKTIYDQEVECLPLDERPQFNIVATRL. The chain crosses the membrane as a helical span at residues 371 to 391; that stretch reads TLSVVPALLMIIGLVIFGWCI. Residues 392–396 are Extracellular-facing; sequence QYKRH. A helical transmembrane segment spans residues 397 to 417; it reads IISIIISTILVSFSASVFIAI. Residues 418-438 lie on the Cytoplasmic side of the membrane; the sequence is CTTMLVDLYPNNGSGSTSCLN. The helical transmembrane segment at 439–456 threads the bilayer; it reads LMRCWLAALGAGVLDSMI. The Extracellular segment spans residues 457 to 460; sequence NAMN. Residues 461–483 form a helical membrane-spanning segment; sequence VGGTYTVVAGFCILFDLALIYVL. The Cytoplasmic portion of the chain corresponds to 484–504; the sequence is HNAKKKFSNSGPTTTKSPPKQ.

Belongs to the major facilitator superfamily. CAR1 family.

It localises to the cell membrane. Functionally, MFS antiporter that does not display functional linkage as drug transporter and performs functions that significantly affect biofilm development and virulence. No substrate for transport has been identified yet, but plays an important role in the growth in the host. The chain is MFS antiporter QDR2 (QDR2) from Candida albicans (strain SC5314 / ATCC MYA-2876) (Yeast).